The sequence spans 131 residues: Profilin-1 (131 aa).

Belongs to the profilin family. In terms of assembly, occurs in many kinds of cells as a complex with monomeric actin in a 1:1 ratio.

The protein localises to the cytoplasm. It is found in the cytoskeleton. In terms of biological role, binds to actin and affects the structure of the cytoskeleton. At high concentrations, profilin prevents the polymerization of actin, whereas it enhances it at low concentrations. By binding to PIP2, it inhibits the formation of IP3 and DG. The protein is Profilin-1 (PRO1) of Ricinus communis (Castor bean).